The following is a 329-amino-acid chain: Anthranilate phosphoribosyltransferase (329 aa).

5-phospho-alpha-D-ribose 1-diphosphate is bound by residues Gly78, 81–82 (GD), 88–91 (NLST), 106–114 (KHGNRAASS), and Ser118. Gly78 lines the anthranilate pocket. Ser90 contributes to the Mg(2+) binding site. Asn109 contributes to the anthranilate binding site. Arg164 lines the anthranilate pocket. Positions 221 and 222 each coordinate Mg(2+).

This sequence belongs to the anthranilate phosphoribosyltransferase family. As to quaternary structure, homodimer. Mg(2+) is required as a cofactor.

The catalysed reaction is N-(5-phospho-beta-D-ribosyl)anthranilate + diphosphate = 5-phospho-alpha-D-ribose 1-diphosphate + anthranilate. The protein operates within amino-acid biosynthesis; L-tryptophan biosynthesis; L-tryptophan from chorismate: step 2/5. In terms of biological role, catalyzes the transfer of the phosphoribosyl group of 5-phosphorylribose-1-pyrophosphate (PRPP) to anthranilate to yield N-(5'-phosphoribosyl)-anthranilate (PRA). The polypeptide is Anthranilate phosphoribosyltransferase (Thermus thermophilus (strain ATCC BAA-163 / DSM 7039 / HB27)).